The chain runs to 366 residues: Ribosome-binding ATPase YchF (366 aa).

The OBG-type G domain occupies 3 to 259 (LTAGIVGLPN…LEGEEKQMFL (257 aa)). Residue 12–17 (NVGKST) coordinates ATP. Residues S16 and T36 each contribute to the Mg(2+) site. Residues 281-364 (GLATYFTAGE…QDGDVIHFRF (84 aa)) form the TGS domain.

It belongs to the TRAFAC class OBG-HflX-like GTPase superfamily. OBG GTPase family. YchF/OLA1 subfamily. It depends on Mg(2+) as a cofactor.

Its function is as follows. ATPase that binds to both the 70S ribosome and the 50S ribosomal subunit in a nucleotide-independent manner. In Bacillus subtilis (strain 168), this protein is Ribosome-binding ATPase YchF.